The following is a 469-amino-acid chain: Sorting and assembly machinery component 50 homolog (469 aa).

The disordered stretch occupies residues 1–20 (MGTVHARSLEPLPSSGPDFG). In terms of domain architecture, POTRA spans 45–125 (VVVQHVHFDG…LDVTFEVTEL (81 aa)). N6-methyllysine is present on Lys255.

It belongs to the SAM50/omp85 family. As to quaternary structure, associates with the mitochondrial contact site and cristae organizing system (MICOS) complex, composed of at least MICOS10/MIC10, CHCHD3/MIC19, CHCHD6/MIC25, APOOL/MIC27, IMMT/MIC60, APOO/MIC23/MIC26 and QIL1/MIC13. This complex was also known under the names MINOS or MitOS complex. The MICOS complex associates with mitochondrial outer membrane proteins SAMM50, MTX1 and MTX2 (together described as components of the mitochondrial outer membrane sorting assembly machinery (SAM) complex) and DNAJC11, mitochondrial inner membrane protein TMEM11 and with HSPA9. The MICOS and SAM complexes together with DNAJC11 are part of a large protein complex spanning both membranes termed the mitochondrial intermembrane space bridging (MIB) complex. Interacts with CHCHD3/MIC19. Interacts with ARMC1. In terms of assembly, (Microbial infection) Interacts with parasite T.gondii RH strain MAF1b1; the interaction is probably indirect and results in the disruption of the MIB complex and the formation of SPOTs (structures positive for outer mitochondrial membrane (OMM)), a cellular response to OMM stress, which leads to the constitutive shedding of OMM vesicles.

The protein localises to the mitochondrion outer membrane. Its subcellular location is the cytoplasm. It localises to the mitochondrion. In terms of biological role, plays a crucial role in the maintenance of the structure of mitochondrial cristae and the proper assembly of the mitochondrial respiratory chain complexes. Required for the assembly of TOMM40 into the TOM complex. The sequence is that of Sorting and assembly machinery component 50 homolog (SAMM50) from Homo sapiens (Human).